A 947-amino-acid polypeptide reads, in one-letter code: Protein RRC1-like (947 aa).

Positions M1–P11 are enriched in basic and acidic residues. Disordered regions lie at residues M1 to Q35 and P63 to P167. The segment covering G12 to K34 has biased composition (basic residues). Basic and acidic residues-rich tracts occupy residues N66 to S84 and K104 to S155. In terms of domain architecture, RRM spans T187–V268. The SURP motif repeat unit spans residues I336–Y379. The interval P412–K434 is disordered. The 146-residue stretch at L444–R589 folds into the CID domain. In terms of domain architecture, SAP spans L638–K672. Disordered regions lie at residues R752–E797 and G846–R947. Composition is skewed to basic and acidic residues over residues L854–S876, L888–D916, and S924–R947.

In terms of tissue distribution, expressed in leaves, inflorescence stems, roots, flower buds, open flowers and siliques.

Its function is as follows. Probable SR-like splicing factor. The polypeptide is Protein RRC1-like (Arabidopsis thaliana (Mouse-ear cress)).